The primary structure comprises 130 residues: uncharacterized protein (130 aa).

The first 19 residues, 1 to 19 (MLAPLFLCCLRNLFRKLIS), serve as a signal peptide directing secretion.

It is found in the secreted. This is an uncharacterized protein from Homo sapiens (Human).